A 209-amino-acid chain; its full sequence is Large ribosomal subunit protein uL3 (209 aa).

Positions Asn-127–Met-166 are disordered.

Belongs to the universal ribosomal protein uL3 family. In terms of assembly, part of the 50S ribosomal subunit. Forms a cluster with proteins L14 and L19.

Its function is as follows. One of the primary rRNA binding proteins, it binds directly near the 3'-end of the 23S rRNA, where it nucleates assembly of the 50S subunit. The chain is Large ribosomal subunit protein uL3 from Chlorobium phaeovibrioides (strain DSM 265 / 1930) (Prosthecochloris vibrioformis (strain DSM 265)).